A 156-amino-acid polypeptide reads, in one-letter code: Small ribosomal subunit protein uS7c (156 aa).

This sequence belongs to the universal ribosomal protein uS7 family. In terms of assembly, part of the 30S ribosomal subunit.

It is found in the plastid. The protein resides in the chloroplast. Its function is as follows. One of the primary rRNA binding proteins, it binds directly to 16S rRNA where it nucleates assembly of the head domain of the 30S subunit. The protein is Small ribosomal subunit protein uS7c (rps7) of Chlorokybus atmophyticus (Soil alga).